We begin with the raw amino-acid sequence, 135 residues long: Protein NrdI (135 aa).

Belongs to the NrdI family.

Functionally, probably involved in ribonucleotide reductase function. The chain is Protein NrdI from Rhizobium johnstonii (strain DSM 114642 / LMG 32736 / 3841) (Rhizobium leguminosarum bv. viciae).